The sequence spans 720 residues: MRNGINILSYPRFLSFCEVFVLLLCNFSDNPKLQTFTQMLNSLFLSARAFPSLITNSSSRRAKSSQFDQFRENRGVSDAAIKVPTAPWMKGPLLLRPDEILDTKKRNKPRKVEEKTFKALNRRESGVRGKKAMKKIVRNVEKLDEDSDSEETQMDDLSEFEYLGRIEEKVESKDRFGGKMPWEREEERFILRRMKKESVPTTAELILDEGLLNRLRREASKMRKWVNVRKAGVTELVVNKIKSMWKLNELAMVRFDVPLCRNMERAQEIIEMKTGGLVVLSKKEFLVVYRGGPSYSSEGQDEISSSLYEREADRLLDGLGPRYMDWWMRRPFPVDADLLPEVVNGYMTPSRRCPPNTRAKLTDEELTYLRNIAQPLPFHFVLGRNYGLQGLASAIVKLWEKCIIAKIAIKWGALNTNNEEMADELRYLTGGVLILRNKYLIVLYRGKDFLSDEVADLVEDRERLLSRYQHFEETKRESDIELLEVVTNGKQLKETNKSGTLLEFQELQRKFGEMDPRNLETEAEKARLEKELKSQEHKLSILKSKIEKSNMELFKLNSLWKPSEGDDDIEILTNEERECLRRIGLKMNSSLVLGRRGVFFGVMEGLHQHWKHREVAKVITMQKLFSRVVYTAKALETESNGVLISIEKLKEGHAILIYRGKNYKRPSSKLMAQNLLTKRKALQRSVVMQRLGSLKFFAYQRERAIEDLKVSLVNLQDSAF.

Residues 1 to 77 (MRNGINILSY…DQFRENRGVS (77 aa)) constitute a chloroplast transit peptide. Residues 131–159 (KAMKKIVRNVEKLDEDSDSEETQMDDLSE) are a coiled coil. 2 consecutive CRM domains span residues 205–301 (LILD…EGQD) and 359–456 (AKLT…EVAD). 2 coiled-coil regions span residues 447–477 (KDFLSDEVADLVEDRERLLSRYQHFEETKRE) and 517–553 (RNLETEAEKARLEKELKSQEHKLSILKSKIEKSNMEL). The 101-residue stretch at 570–670 (EILTNEEREC…KNYKRPSSKL (101 aa)) folds into the CRM 3 domain.

In terms of assembly, homodimer. Interacts with RNA. Part of large ribonucleo-protein complexes that include group IIA introns and CRS1.

The protein resides in the plastid. It is found in the chloroplast stroma. In terms of biological role, required for the splicing of group IIA introns in chloroplasts, by regulating the intron folding. Forms splicing particles with RNA. May also be involved in chloroplast protein translation. The polypeptide is Chloroplastic group IIA intron splicing facilitator CRS1, chloroplastic (Arabidopsis thaliana (Mouse-ear cress)).